Reading from the N-terminus, the 186-residue chain is Adenine phosphoribosyltransferase (186 aa).

Belongs to the purine/pyrimidine phosphoribosyltransferase family. Homodimer.

It is found in the cytoplasm. The enzyme catalyses AMP + diphosphate = 5-phospho-alpha-D-ribose 1-diphosphate + adenine. It functions in the pathway purine metabolism; AMP biosynthesis via salvage pathway; AMP from adenine: step 1/1. Functionally, catalyzes a salvage reaction resulting in the formation of AMP, that is energically less costly than de novo synthesis. This is Adenine phosphoribosyltransferase from Xanthomonas oryzae pv. oryzae (strain MAFF 311018).